A 702-amino-acid polypeptide reads, in one-letter code: MKNIFFICFCALFAFSGCADDDDDLLTGGNVDIDLLPDAKPNDVVDPQVFEAINLNYPGLEKVKEFYEAGEHYYAANALLEYYRTRTNVTNPNLSLINVTISEAEQAKADYALVDYRFHVNNFYEDKETLKPYSVKQDGGINWEYSPKDASDEYQKQLHRHQWFIPQAKAYRVSGDEKYIQSWIEVYKNWIENNPKPTTGPNTTSWWQLQVSTRIGDQVQLLEYFKNSVNFTPEWLSTFLVEFAEQADFLVDYPYESGGNILISQANALATAGTLMPEFKNAEKWMNTGYQILSEEVQNQIMSDGWHKEMSLHYHIGIVADFYEAMKLAEANQLSSKLPSDFTEPLRKAAEVVMYFTYPNYFIKGSDNVVPMFNDSWSRTRNVLKNTNFKQYVEMFPDSEELKYMQTAGNGGTAQGRTPNNDMKLFDQAGYYVLRNGWTPASTVMILSNNKSNDASNSLSAYSHNQPDNGTFELYHNGRNFFPDSGVCTYYTSGGDNDLRYWFRGIDKHNTLSIGKQNIKKAAGKLLKSEEGATELVVFENQGYDNLKHRRAVFYVNKKFFVLVDEGIGNAEGTINLSFNLCEGTASEVVMDTDKNGVHTAFSNNNNIIVRTFANKAVTCSPFTGRIAYLVDGAYNTRQSYTIDMNKSADETARYITVILPVNGSTDTSSISAKFIDSGYSENSASVEVSVNGETHTLSYTL.

An N-terminal signal peptide occupies residues 1–17; it reads MKNIFFICFCALFAFSG. Residue Tyr-314 is the Proton acceptor of the active site.

Belongs to the polysaccharide lyase 12 family.

Its subcellular location is the periplasm. The catalysed reaction is Elimination of sulfate, appears to act on linkages between N-acetyl-D-glucosamine and uronate. Product is an unsaturated sugar.. Functionally, specifically cleaves heparan sulfate-rich regions of acidic polysaccharides. Does not act on N,O-desulfated glucosamine or N-acetyl-O-sulfated glucosamine linkages. Functions in cleaving metazoan heparan sulfate and providing carbon, nitrogen and sulfate sources for microorganisms. This Bacteroides thetaiotaomicron (strain ATCC 29148 / DSM 2079 / JCM 5827 / CCUG 10774 / NCTC 10582 / VPI-5482 / E50) protein is Heparin-sulfate lyase (hepC).